The sequence spans 681 residues: Propionyl-CoA carboxylase alpha chain (681 aa).

One can recognise a Biotin carboxylation domain in the interval 1–466; it reads MFNKILIANR…TTAFIAEEYP (466 aa). ATP is bound by residues lysine 116, 148 to 209, glutamate 200, and asparagine 235; that span reads SNQI…PRHI. Residues 120-317 enclose the ATP-grasp domain; sequence KKIAQEANVS…LVEQMIRVAA (198 aa). The Mg(2+) site is built by glutamate 275, glutamate 288, and asparagine 290. Positions 275, 288, and 290 each coordinate Mn(2+). Residue glutamate 288 is part of the active site. Biotin is bound at residue phenylalanine 348. The region spanning 602–681 is the Biotinyl-binding domain; it reads LMPEKLPPDT…AVDDVIMEFE (80 aa). Lysine 647 carries the post-translational modification N6-biotinyllysine.

The holoenzyme is a dodecamer composed of 6 PccA/alpha subunits and 6 PccB/beta subunits. Mg(2+) is required as a cofactor. The cofactor is Mn(2+). It depends on biotin as a cofactor. Post-translationally, the biotin cofactor is covalently attached to the C-terminal biotinyl-binding domain and is required for the catalytic activity.

The catalysed reaction is propanoyl-CoA + hydrogencarbonate + ATP = (S)-methylmalonyl-CoA + ADP + phosphate + H(+). It functions in the pathway metabolic intermediate metabolism; propanoyl-CoA degradation; succinyl-CoA from propanoyl-CoA: step 1/3. In terms of biological role, this is one of the 2 subunits of the biotin-dependent propionyl-CoA carboxylase (PCC), the enzyme catalyzing the carboxylation of propionyl-CoA/propanoyl-CoA to D-methylmalonyl-CoA/(S)-methylmalonyl-CoA. Within the holoenzyme, the alpha subunit catalyzes the ATP-dependent carboxylation of the biotin carried by the biotin carboxyl carrier (BCC) domain, while the beta subunit then tranfers the carboxyl group from carboxylated biotin to propionyl-CoA. The protein is Propionyl-CoA carboxylase alpha chain of Ruegeria pomeroyi (strain ATCC 700808 / DSM 15171 / DSS-3) (Silicibacter pomeroyi).